A 2595-amino-acid chain; its full sequence is Glucosylceramide transporter ABCA12 (2595 aa).

A helical membrane pass occupies residues 23-43 (PLWTLVLILWPVIIFIILAIT). N-linked (GlcNAc...) asparagine glycosylation is found at asparagine 156, asparagine 174, asparagine 214, asparagine 275, asparagine 333, asparagine 367, asparagine 383, asparagine 412, asparagine 435, asparagine 528, asparagine 543, asparagine 577, asparagine 608, asparagine 623, asparagine 648, asparagine 752, asparagine 826, asparagine 920, and asparagine 963. 3 helical membrane passes run 1065-1085 (VSYS…AAFV), 1112-1132 (FAWL…LIII), and 1145-1165 (FILF…SYLI). A glycan (N-linked (GlcNAc...) asparagine) is linked at asparagine 1170. 3 helical membrane-spanning segments follow: residues 1174–1194 (IAAL…IVLV), 1200–1220 (LSYV…SYAS), and 1250–1270 (FGWL…IAWY). An ABC transporter 1 domain is found at 1346–1577 (VALHGVTKIY…FGDGYHLTLT (232 aa)). Residue 1378–1385 (GPNGAGKT) participates in ATP binding. N-linked (GlcNAc...) asparagine glycans are attached at residues asparagine 1524, asparagine 1663, and asparagine 1704. A helical membrane pass occupies residues 1747–1767 (LIAQVILPIVFVTTAMGLGTL). N-linked (GlcNAc...) asparagine glycans are attached at residues asparagine 1769, asparagine 1819, asparagine 1835, asparagine 1876, asparagine 1921, and asparagine 1952. A run of 4 helical transmembrane segments spans residues 1979–1999 (ATIS…GYSV), 2035–2055 (FIYD…IIAI), 2072–2092 (LLLL…AGLF), and 2103–2123 (VCVN…VYFL). Asparagine 2178 carries N-linked (GlcNAc...) asparagine glycosylation. The chain crosses the membrane as a helical span at residues 2187 to 2207 (GAMFVALVSQGTMFFSLRLLI). N-linked (GlcNAc...) asparagine glycans are attached at residues asparagine 2208 and asparagine 2223. The ABC transporter 2 domain maps to 2254-2489 (VQLYCLTKTY…FGRGFTVKVH (236 aa)). The helical transmembrane segment at 2270-2290 (IIAVNNISIGIPAGECFGLLG) threads the bilayer. 2290–2297 (GVNGAGKT) provides a ligand contact to ATP. 3 N-linked (GlcNAc...) asparagine glycosylation sites follow: asparagine 2318, asparagine 2542, and asparagine 2547. A disordered region spans residues 2571–2595 (SYETADTSSQGSTISVDSQDDQMES). Positions 2574-2587 (TADTSSQGSTISVD) are enriched in polar residues.

This sequence belongs to the ABC transporter superfamily. ABCA family. Interacts with NR1H2 and ABCA1; this interaction is required for ABCA1 localization to the cell surface and is necessary for its normal activity and stability. As to expression, mainly expressed in the stomach, placenta, testis and fetal brain. Expressed in the upper epidermal layers, mainly the granular layers, of skin. Expressed throughout the normal interfollicular epidermis with prominent expression in the stratum granulosum. Expressed in alpha and beta cells of pancreatic islets.

Its subcellular location is the cytoplasmic vesicle. The protein localises to the secretory vesicle membrane. It is found in the golgi apparatus membrane. It catalyses the reaction ATP + H2O + phospholipidSide 1 = ADP + phosphate + phospholipidSide 2.. The catalysed reaction is a beta-D-glucosylceramide(in) + ATP + H2O = a beta-D-glucosylceramide(out) + ADP + phosphate + H(+). Functionally, transports lipids such as glucosylceramides from the outer to the inner leaflet of lamellar granules (LGs) membrane, whereby the lipids are finally transported to the keratinocyte periphery via the trans-Golgi network and LGs and released to the apical surface of the granular keratinocytes to form lipid lamellae in the stratum corneum of the epidermis, which is essential for skin barrier function. In the meantime, participates in the transport of the lamellar granules-associated proteolytic enzymes, in turn regulates desquamation and keratinocyte differentiation. Furthermore, is essential for the regulation of cellular cholesterol homeostasis by regulating ABCA1-dependent cholesterol efflux from macrophages through interaction with NR1H2 and ABCA1. Plays pleiotropic roles in regulating glucose stimulated insulin secretion from beta cells, regulating the morphology and fusion of insulin granules, lipid raft abundance and the actin cytoskeleton. Also involved in lung surfactant biogenesis. This chain is Glucosylceramide transporter ABCA12, found in Homo sapiens (Human).